The chain runs to 361 residues: Fructose-1,6-bisphosphatase class 1 2 (361 aa).

Residues glutamate 110, aspartate 134, leucine 136, and aspartate 137 each contribute to the Mg(2+) site. Substrate-binding positions include 137–140, asparagine 231, tyrosine 264, and lysine 294; that span reads DGSS. Glutamate 300 contributes to the Mg(2+) binding site.

This sequence belongs to the FBPase class 1 family. Homotetramer. Requires Mg(2+) as cofactor.

The protein localises to the cytoplasm. It catalyses the reaction beta-D-fructose 1,6-bisphosphate + H2O = beta-D-fructose 6-phosphate + phosphate. It functions in the pathway carbohydrate biosynthesis; gluconeogenesis. The polypeptide is Fructose-1,6-bisphosphatase class 1 2 (Salinibacter ruber (strain DSM 13855 / M31)).